The chain runs to 735 residues: Photosystem I P700 chlorophyll a apoprotein A2 (735 aa).

The next 8 membrane-spanning stretches (helical) occupy residues 46 to 69 (LFSTHFGHLAIIGLWVSGNLFHIA), 135 to 158 (LYQGSIFMMILSAWALFAGWLHLQ), 175 to 199 (LNHHLAVLFGFSSIAWTGHLVHVAI), 273 to 291 (IAHHHLAIGCLFVIAGHMY), 333 to 356 (LHFQLGLALASLGVVTSLVAQHMY), 372 to 398 (AALYTHHQYIAIALMCGAFAHGAIFFI), 420 to 442 (AIISHLSWVSLFLGFHTLGLYVH), and 518 to 536 (FLVHHAIALGLHTTTLILV). C560 and C569 together coordinate [4Fe-4S] cluster. The next 2 membrane-spanning stretches (helical) occupy residues 576–597 (AFYLAVFWALNTVGWLTFYWHW) and 644–666 (LAVWSWMFLFGHLVWATGFMFLI). 3 residues coordinate chlorophyll a: H655, M663, and Y671. Phylloquinone is bound at residue W672. A helical transmembrane segment spans residues 708–728 (VVGLAHFSVGYVLTYAAFLIA).

Belongs to the PsaA/PsaB family. The PsaA/B heterodimer binds the P700 chlorophyll special pair and subsequent electron acceptors. PSI consists of a core antenna complex that captures photons, and an electron transfer chain that converts photonic excitation into a charge separation. The cyanobacterial PSI reaction center is composed of one copy each of PsaA,B,C,D,E,F,I,J,K,L,M and X, and forms trimeric complexes. Requires PSI electron transfer chain: 5 chlorophyll a, 1 chlorophyll a', 2 phylloquinones and 3 4Fe-4S clusters. PSI core antenna: 90 chlorophyll a, 22 carotenoids, 3 phospholipids and 1 galactolipid. P700 is a chlorophyll a/chlorophyll a' dimer, A0 is one or more chlorophyll a, A1 is one or both phylloquinones and FX is a shared 4Fe-4S iron-sulfur center. as cofactor.

The protein resides in the cellular thylakoid membrane. The enzyme catalyses reduced [plastocyanin] + hnu + oxidized [2Fe-2S]-[ferredoxin] = oxidized [plastocyanin] + reduced [2Fe-2S]-[ferredoxin]. Functionally, psaA and PsaB bind P700, the primary electron donor of photosystem I (PSI), as well as the electron acceptors A0, A1 and FX. PSI is a plastocyanin/cytochrome c6-ferredoxin oxidoreductase, converting photonic excitation into a charge separation, which transfers an electron from the donor P700 chlorophyll pair to the spectroscopically characterized acceptors A0, A1, FX, FA and FB in turn. Oxidized P700 is reduced on the lumenal side of the thylakoid membrane by plastocyanin or cytochrome c6. The protein is Photosystem I P700 chlorophyll a apoprotein A2 of Synechococcus sp. (strain CC9902).